Here is a 298-residue protein sequence, read N- to C-terminus: ATP synthase gamma chain (298 aa).

It belongs to the ATPase gamma chain family. As to quaternary structure, F-type ATPases have 2 components, CF(1) - the catalytic core - and CF(0) - the membrane proton channel. CF(1) has five subunits: alpha(3), beta(3), gamma(1), delta(1), epsilon(1). CF(0) has three main subunits: a, b and c.

The protein resides in the cell membrane. Functionally, produces ATP from ADP in the presence of a proton gradient across the membrane. The gamma chain is believed to be important in regulating ATPase activity and the flow of protons through the CF(0) complex. In Frankia casuarinae (strain DSM 45818 / CECT 9043 / HFP020203 / CcI3), this protein is ATP synthase gamma chain.